Consider the following 458-residue polypeptide: 5-hydroxytryptamine receptor 2C (458 aa).

The first 32 residues, 1–32 (MVNLRKAVHSFLVHLIGLLVWQCDISVSPVAA), serve as a signal peptide directing secretion. Topologically, residues 33–55 (LVTDIFNTSDGGRFKFPDGVQNW) are extracellular. The helical transmembrane segment at 56–80 (PALSIVIIIILTIGGNILVIMAVSL) threads the bilayer. Topologically, residues 81–86 (EKKLHN) are cytoplasmic. A helical transmembrane segment spans residues 87 to 111 (ATNYFLMSLAIADMLVGLLVMPLSL). Over 112–128 (LAILYDYVWPLPRYLCP) the chain is Extracellular. Cys-127 and Cys-207 are joined by a disulfide. Residues 129-151 (VWISLDVLFSTASIMHLCAISLD) traverse the membrane as a helical segment. Ergotamine is bound at residue Thr-139. The short motif at 151–153 (DRY) is the DRY motif; important for ligand-induced conformation changes element. Residues 152–167 (RYVAIRNPVEHSRFNS) lie on the Cytoplasmic side of the membrane. A helical membrane pass occupies residues 168-189 (RTKAIMKIAIVWAISIGVSVPI). The Extracellular segment spans residues 190-213 (PVIGLRDEEKVFVNNTTCVLNDPN). Residues Asn-203 and Asn-204 are each glycosylated (N-linked (GlcNAc...) asparagine). Leu-209 lines the ergotamine pocket. The helical transmembrane segment at 214–236 (FVLIGSFVAFFIPLTIMVITYCL) threads the bilayer. Over 237–311 (TIHVLRRQAL…AINNERKASK (75 aa)) the chain is Cytoplasmic. The disordered stretch occupies residues 272–301 (TEEENSANPNQDSNPRRRKKKERRPRGTMQ). A compositionally biased stretch (basic residues) spans 287-297 (RRRKKKERRPR). A helical transmembrane segment spans residues 312–336 (VLGIVFFVFLVMWCPFFITNILSVL). Residues Cys-337 and Cys-341 are joined by a disulfide bond. Topologically, residues 337–347 (CGKACNQKLME) are extracellular. Residues 348–370 (KLLNVFVWIGYVCSGINPLVYTL) traverse the membrane as a helical segment. Residues 364–368 (NPLVY) carry the NPxxY motif; important for ligand-induced conformation changes and signaling motif. Residues 371–458 (FNKIYRRAFS…SVVSERISSV (88 aa)) lie on the Cytoplasmic side of the membrane. Residues 456-458 (SSV) carry the PDZ-binding motif.

This sequence belongs to the G-protein coupled receptor 1 family. As to quaternary structure, interacts with MPDZ. Interacts with ARRB2. Interacts with MPP3; this interaction stabilizes the receptor at the plasma membrane and prevents the desensitization of the HTR2C receptor-mediated calcium response.

The protein localises to the cell membrane. Its function is as follows. G-protein coupled receptor for 5-hydroxytryptamine (serotonin). Also functions as a receptor for various drugs and psychoactive substances, including ergot alkaloid derivatives, 1-2,5,-dimethoxy-4-iodophenyl-2-aminopropane (DOI) and lysergic acid diethylamide (LSD). Ligand binding causes a conformation change that triggers signaling via guanine nucleotide-binding proteins (G proteins) and modulates the activity of downstream effectors. HTR2C is coupled to G(q)/G(11) G alpha proteins and activates phospholipase C-beta, releasing diacylglycerol (DAG) and inositol 1,4,5-trisphosphate (IP3) second messengers that modulate the activity of phosphatidylinositol 3-kinase and promote the release of Ca(2+) ions from intracellular stores, respectively. Beta-arrestin family members inhibit signaling via G proteins and mediate activation of alternative signaling pathways. Regulates neuronal activity via the activation of short transient receptor potential calcium channels in the brain, and thereby modulates the activation of pro-opiomelanocortin neurons and the release of CRH that then regulates the release of corticosterone. Plays a role in the regulation of appetite and eating behavior, responses to anxiogenic stimuli and stress. Plays a role in insulin sensitivity and glucose homeostasis. This chain is 5-hydroxytryptamine receptor 2C, found in Canis lupus familiaris (Dog).